A 225-amino-acid polypeptide reads, in one-letter code: Lipid A 4'-phosphatase (225 aa).

Transmembrane regions (helical) follow at residues 29-49 (SAFT…YILL), 51-71 (NFHW…ITFA), 110-130 (FGFP…LICL), 136-156 (LSIF…YLGL), 160-180 (GDLV…YFIA), and 203-223 (TEVM…YSIV).

It belongs to the lipid A LpxF 4'-phosphatase family.

The protein localises to the cell inner membrane. Its pathway is bacterial outer membrane biogenesis; LPS lipid A biosynthesis. Functionally, probably removes the 4'-phosphate group from lipid A. Removal of this phosphate group confers resistance to cationic antimicrobial peptides (CAMPs), inflammation-associated peptides produced by the human host. This LPS modification helps maintain the stability of this commensal bacterium in gut microbiota. This Bacteroides thetaiotaomicron (strain ATCC 29148 / DSM 2079 / JCM 5827 / CCUG 10774 / NCTC 10582 / VPI-5482 / E50) protein is Lipid A 4'-phosphatase.